The sequence spans 141 residues: Ubiquitin-like protein ATG12 (141 aa).

The interval 1 to 53 (MSEDSEVVLQLPSAPVGAGGESLPELSPETATPEPPSSAAVSPGTEEPPGDTK) is disordered. Over residues 23–40 (LPELSPETATPEPPSSAA) the composition is skewed to low complexity. Residue Gly-141 forms a Glycyl lysine isopeptide (Gly-Lys) (interchain with K-? in acceptor protein) linkage.

The protein belongs to the ATG12 family. Forms a conjugate with ATG5. Part of the minor complex composed of 4 sets of ATG12-ATG5 and ATG16L1 (400 kDa); this complex interacts with ATG3 leading to disruption of ATG7 interaction and promotion of ATG8-like proteins lipidation. Forms an 800-kDa complex composed of ATG12-ATG5 and ATG16L2. Interacts with DHX58/RIG-1, IFIH1/MDA5 and MAVS/IPS-1 in monomeric form as well as in ATG12-ATG5 conjugate. The interaction with MAVS is further enhanced upon vesicular stomatitis virus (VSV) infection. Interacts with ATG3; this interaction is essential for phosphatidylethanolamine (PE)-conjugated ATG8-like proteins formation. Interacts with ATG7. Interacts with ATG10. The ATG12-ATG5 conjugate interacts with RAB33A; this interaction is bridged by ATG16L1 and promotes ATG12-ATG5-ATG16L1 complex recruitment to phagophores. Interacts with TECPR1. Interacts with SH3BGRL. The ATG12-ATG5 conjugate interacts with PDCD6IP (via the BRO1 domain); this interaction is bridged by ATG12 and promotes multiple PDCD6IP-mediated functions such as endolysosomal trafficking, macroautophagy and exosome biogenesis. In terms of processing, acetylated by EP300. In terms of tissue distribution, ubiquitous.

Its subcellular location is the cytoplasm. It localises to the preautophagosomal structure membrane. Functionally, ubiquitin-like protein involved in autophagy vesicles formation. Conjugation with ATG5 through a ubiquitin-like conjugating system involving also ATG7 as an E1-like activating enzyme and ATG10 as an E2-like conjugating enzyme, is essential for its function. The ATG12-ATG5 conjugate acts as an E3-like enzyme which is required for lipidation of ATG8 family proteins and their association to the vesicle membranes. As part of the ATG8 conjugation system with ATG5 and ATG16L1, required for recruitment of LRRK2 to stressed lysosomes and induction of LRRK2 kinase activity in response to lysosomal stress. (Microbial infection) May act as a proviral factor. In association with ATG5, negatively regulates the innate antiviral immune response by impairing the type I IFN production pathway upon vesicular stomatitis virus (VSV) infection. This is Ubiquitin-like protein ATG12 from Mus musculus (Mouse).